A 255-amino-acid chain; its full sequence is MPAPALSGPQYLREGLKLVLSPGLRLFVLLPLAINLVLFVGLIYFAGHQFSLWVDHLMPTLPSWLSFLNYLLWPLFVVLVVLMVFFTFTMLANIIAAPFNGFLSEKVEVVVRGTDDFPAFSWGELIAMVPRTLAREMRKLGYFLPRAIGLFILSFIPVVNLIAAPLWLLFGVWMMAIQYIDYPADNHKLGWNEMLAWLRQKRWQSMSFGGIVYLVLLVPVVNLLMMPAAVAGATLFWVREQGAEAMAPQQKVTRS.

4 helical membrane-spanning segments follow: residues 26 to 46 (LFVL…IYFA), 71 to 91 (LLWP…FTML), 150 to 170 (LFIL…WLLF), and 211 to 231 (IVYL…AAVA).

Belongs to the CysZ family.

It localises to the cell inner membrane. Its function is as follows. High affinity, high specificity proton-dependent sulfate transporter, which mediates sulfate uptake. Provides the sulfur source for the cysteine synthesis pathway. In Pseudomonas fluorescens (strain SBW25), this protein is Sulfate transporter CysZ.